Reading from the N-terminus, the 372-residue chain is MGRVPCCEKDNVKRGQWTPEEDNKLLSYITQYGTRNWRLIPKNAGLQRCGKSCRLRWTNYLRPDLKHGEFTDAEEQTIIKLHSVVGNRWSVIAAQLPGRTDNDVKNHWNTKLKKKLSGMGIDPVTHKSFSHLMAEIATTLAPPQVAHLAEAALGCFKDEMLHLLTKKRPSDFPSPAVHDGAGAGASASALAAPCFPAAPPHHPQADDTIERIKLGLSRAIMSDPSTASAAAAAAAPSAPAEDKPWPPGDMSEGLAGMYATYNPAAHAHAQAQAEFRYDGASAAQGYVLGGDGDQGTSMWSHQSLYSGSSGTEEARRELPEKGNDSVGSSGGDDDAADDGKDSGKGAASDMSGLFASDCVLWDLPDELTNHMV.

2 HTH myb-type domains span residues 9-65 and 66-116; these read KDNV…RPDL and KHGE…KKKL. 2 consecutive DNA-binding regions (H-T-H motif) follow at residues 37-61 and 89-112; these read WRLI…TNYL and WSVI…NTKL. A compositionally biased stretch (polar residues) spans 298–311; the sequence is MWSHQSLYSGSSGT. Residues 298–347 form a disordered region; that stretch reads MWSHQSLYSGSSGTEEARRELPEKGNDSVGSSGGDDDAADDGKDSGKGAA. Residues 312 to 323 show a composition bias toward basic and acidic residues; that stretch reads EEARRELPEKGN.

It localises to the nucleus. Functionally, essential for tapetum development in anthers and microsporogenesis. May regulate the timing of tapetal programmed cell death (PCD) which is critical for pollen development. The protein is Transcription factor MYB80 of Oryza sativa subsp. japonica (Rice).